A 433-amino-acid polypeptide reads, in one-letter code: O-methyltransferase VdtC (433 aa).

D284 is an S-adenosyl-L-methionine binding site. Catalysis depends on H335, which acts as the Proton acceptor.

This sequence belongs to the class I-like SAM-binding methyltransferase superfamily. Cation-independent O-methyltransferase family. COMT subfamily.

It carries out the reaction 7,9,10-trihydroxy-3-(2-oxopropyl)-1H-benzo[g]isochromen-1-one + S-adenosyl-L-methionine = 9,10-dihydroxy-7-methoxy-3-(2-oxopropyl)-1H-benzo[g]isochromen-1-one + S-adenosyl-L-homocysteine + H(+). It functions in the pathway secondary metabolite biosynthesis. O-methyltransferase; part of the gene cluster that mediates the biosynthesis of viriditoxin, one of the 'classical' secondary metabolites produced by fungi and that has antibacterial activity. The first step is performed by the polyketide synthase VdtA which condenses one acetyl-CoA and 6 malonyl-CoA units to form the heptaketide monomer backbone of viriditoxin. The product of VdtA is then O-methylated on C7 by the O-methyltransferase VdtC. The O-methyl group is important for the stereoselective coupling of the monomers at the final step of viriditoxin biosynthesis. The short-chain dehydrogenase/reductase VdtF then acts as a stereospecific reductase converting the pyrone to dihydropyrone via the reduction of the C3-C4 double bond. The FAD-binding monooxygenase VdtE then converts the ketone group into a methyl-ester group to yield semi-viriditoxin. Finally, the laccase VdtB is involved in dimerization of 2 semi-viriditoxin molecules to yield the final viriditoxin. VdtB is responsible for the regioselective 6,6'-coupling of semi-viriditoxin, which yields (M)-viriditoxin and (P)-viriditoxin at a ratio of 1:2. The non-catalytic carboxylesterase-like protein VdtD affects the stereochemistical outcome of the coupling. The highly reducing polyketide synthase VdtX is not involved in viriditoxin synthesis, but might possibly play a role in the production of additional metabolites not identified yet. The polypeptide is O-methyltransferase VdtC (Byssochlamys spectabilis (Paecilomyces variotii)).